The sequence spans 395 residues: Cystathionine beta-lyase MetC (395 aa).

At Lys-210 the chain carries N6-(pyridoxal phosphate)lysine.

The protein belongs to the trans-sulfuration enzymes family. As to quaternary structure, homotetramer; dimer of dimers. Pyridoxal 5'-phosphate serves as cofactor.

It is found in the cytoplasm. The catalysed reaction is L,L-cystathionine + H2O = L-homocysteine + pyruvate + NH4(+). It catalyses the reaction L-cysteine + H2O = hydrogen sulfide + pyruvate + NH4(+) + H(+). It carries out the reaction an S-substituted L-cysteine + H2O = a thiol + pyruvate + NH4(+). The protein operates within amino-acid biosynthesis; L-methionine biosynthesis via de novo pathway; L-homocysteine from L-cystathionine: step 1/1. L-cysteine inhibits cystathionine beta-lyase activity competitively. Inhibited by aminoethoxyvinylglycine (AVG). Functionally, primarily catalyzes the cleavage of cystathionine to homocysteine, pyruvate and ammonia during methionine biosynthesis. Also exhibits cysteine desulfhydrase activity, producing sulfide from cysteine. In addition, under certain growth conditions, exhibits significant alanine racemase coactivity. This Escherichia coli (strain K12) protein is Cystathionine beta-lyase MetC.